A 316-amino-acid chain; its full sequence is D-alanine--D-alanine ligase (316 aa).

The region spanning 107-303 (KEVFAARGLT…FEDLVERILI (197 aa)) is the ATP-grasp domain. Residue 133–188 (AEGFGYPVVVKPSQEGSSVGVSIVKSPEELPSALELAFRYDDDILVERFIKGREIQ) coordinates ATP. Mg(2+)-binding residues include Asp256, Glu269, and Asn271.

The protein belongs to the D-alanine--D-alanine ligase family. The cofactor is Mg(2+). Mn(2+) is required as a cofactor.

It is found in the cytoplasm. The catalysed reaction is 2 D-alanine + ATP = D-alanyl-D-alanine + ADP + phosphate + H(+). The protein operates within cell wall biogenesis; peptidoglycan biosynthesis. Functionally, cell wall formation. The polypeptide is D-alanine--D-alanine ligase (Geobacter sulfurreducens (strain ATCC 51573 / DSM 12127 / PCA)).